A 291-amino-acid polypeptide reads, in one-letter code: Flavonol synthase/flavanone 3-hydroxylase (291 aa).

The 100-residue stretch at 151-250 (CWYVMNINHY…RMSWPVLVSP (100 aa)) folds into the Fe2OG dioxygenase domain. Residues H175, D177, and H231 each contribute to the Fe cation site.

This sequence belongs to the iron/ascorbate-dependent oxidoreductase family. L-ascorbate is required as a cofactor. Requires Fe cation as cofactor.

The protein resides in the cytoplasm. It carries out the reaction a (2R,3R)-dihydroflavonol + 2-oxoglutarate + O2 = a flavonol + succinate + CO2 + H2O. The enzyme catalyses a (2S)-flavan-4-one + 2-oxoglutarate + O2 = a (2R,3R)-dihydroflavonol + succinate + CO2. Its pathway is secondary metabolite biosynthesis; flavonoid biosynthesis. Its function is as follows. Catalyzes the formation of flavonols from dihydroflavonols. It can act on dihydrokaempferol to produce kaempferol, on dihydroquercetin to produce quercitin and on dihydromyricetin to produce myricetin. The protein is Flavonol synthase/flavanone 3-hydroxylase of Matthiola incana (Common stock).